Consider the following 166-residue polypeptide: Bacterial non-heme ferritin (166 aa).

The Ferritin-like diiron domain maps to 2–145 (LSKNLLEALN…THINYLTRIG (144 aa)). Residues glutamate 17, glutamate 50, histidine 53, glutamate 94, and glutamine 127 each coordinate Fe cation.

This sequence belongs to the ferritin family. Prokaryotic subfamily.

Its subcellular location is the cytoplasm. It catalyses the reaction 4 Fe(2+) + O2 + 6 H2O = 4 iron(III) oxide-hydroxide + 12 H(+). Iron-storage protein. The chain is Bacterial non-heme ferritin (ftnA) from Staphylococcus aureus (strain MRSA252).